A 170-amino-acid chain; its full sequence is Urease accessory protein UreE (170 aa).

It belongs to the UreE family.

The protein localises to the cytoplasm. Involved in urease metallocenter assembly. Binds nickel. Probably functions as a nickel donor during metallocenter assembly. The sequence is that of Urease accessory protein UreE from Helicobacter pylori (strain Shi470).